A 77-amino-acid chain; its full sequence is Anionic peptide 17.1 (77 aa).

The signal sequence occupies residues 1–24 (MASKTVLVLLLVSVLVSTFCTAKA).

This sequence belongs to the non-disulfide-bridged peptide (NDBP) superfamily. Long chain multifunctional peptide (group 2) family. As to expression, expressed by the venom gland.

It is found in the secreted. The sequence is that of Anionic peptide 17.1 from Lychas mucronatus (Chinese swimming scorpion).